Reading from the N-terminus, the 186-residue chain is Ribosome-recycling factor (186 aa).

Belongs to the RRF family.

It is found in the cytoplasm. Its function is as follows. Responsible for the release of ribosomes from messenger RNA at the termination of protein biosynthesis. May increase the efficiency of translation by recycling ribosomes from one round of translation to another. In Methylocella silvestris (strain DSM 15510 / CIP 108128 / LMG 27833 / NCIMB 13906 / BL2), this protein is Ribosome-recycling factor.